Here is a 557-residue protein sequence, read N- to C-terminus: Formate--tetrahydrofolate ligase (557 aa).

ATP is bound at residue T67 to S74.

It belongs to the formate--tetrahydrofolate ligase family.

It carries out the reaction (6S)-5,6,7,8-tetrahydrofolate + formate + ATP = (6R)-10-formyltetrahydrofolate + ADP + phosphate. The protein operates within one-carbon metabolism; tetrahydrofolate interconversion. The polypeptide is Formate--tetrahydrofolate ligase (Latilactobacillus sakei subsp. sakei (strain 23K) (Lactobacillus sakei subsp. sakei)).